Reading from the N-terminus, the 104-residue chain is Circadian clock oscillator protein KaiB (104 aa).

The protein belongs to the KaiB family. The KaiABC complex composition changes during the circadian cycle to control KaiC phosphorylation. Complexes KaiC(6), KaiA(2-4):KaiC(6), KaiB(6):KaiC(6) and KaiC(6):KaiB(6):KaiA(12) are among the most important forms, many form cooperatively. Undergoes a major conformational rearrangment; in the free state forms homotetramers as a dimer of dimers. When bound to the CI domain of KaiC switches to a monomeric thioredoxin-fold (KaiB(fs)). KaiB(fs) binds CikA, leading it to dephosphorylate phospho-RpaA.

Functionally, key component of the KaiABC oscillator complex, which constitutes the main circadian regulator in cyanobacteria. Complex composition changes during the circadian cycle to control KaiC phosphorylation. KaiA stimulates KaiC autophosphorylation, while KaiB sequesters KaiA, leading to KaiC autodephosphorylation. Phospho-Ser-431 KaiC accumulation triggers binding of KaiB to form the KaiB(6):KaiC(6) complex, leading to changes in output regulators CikA and SasA. KaiB switches to a thioredoxin-like fold (KaiB(fs)) when bound to KaiC. KaiB(6):KaiC(6) formation exposes a site for KaiA binding that sequesters KaiA from KaiC, making the KaiC(6):KaiB(6):KaiA(12) complex that results in KaiC autodephosphorylation. Its function is as follows. A metamorphic protein which reversibly switches between an inactive tetrameric fold and a rare, thioredoxin-like monomeric fold (KaiB(fs)). KaiB(fs) binds phospho-KaiC, KaiA and CikA. KaiA and CikA compete for binding to KaiB(fs), and KaiB(fs) and SasA compete for binding to KaiC, thus the clock oscillator and output signal pathway are tightly coupled. This is Circadian clock oscillator protein KaiB from Picosynechococcus sp. (strain ATCC 27264 / PCC 7002 / PR-6) (Agmenellum quadruplicatum).